The sequence spans 196 residues: V-type proton ATPase subunit E (196 aa).

The protein belongs to the V-ATPase E subunit family.

Functionally, produces ATP from ADP in the presence of a proton gradient across the membrane. The chain is V-type proton ATPase subunit E from Clostridium botulinum (strain Alaska E43 / Type E3).